The following is a 560-amino-acid chain: Putative transport protein VS_1837 (560 aa).

5 helical membrane passes run 5–25 (VVLL…SIGL), 37–57 (LGNS…GFSF), 66–86 (FMLF…GIFF), 91–111 (HYLI…YFCS), and 155–175 (LGLV…VGLI). RCK C-terminal domains lie at 203–292 (RGLG…FRNG) and 293–376 (KEVF…KIGF). The next 6 helical transmembrane spans lie at 386–406 (LTAF…TMTF), 409–429 (VSFG…LGFL), 450–470 (LGLM…IFEH), 478–498 (VIGI…LVGA), 506–526 (ALLF…DIVN), and 539–559 (AGTY…IIII).

It belongs to the AAE transporter (TC 2.A.81) family. YbjL subfamily.

The protein localises to the cell membrane. The protein is Putative transport protein VS_1837 of Vibrio atlanticus (strain LGP32) (Vibrio splendidus (strain Mel32)).